Consider the following 240-residue polypeptide: Orotidine 5'-phosphate decarboxylase (240 aa).

Substrate is bound by residues Asp-15, Lys-37, 64–73, Thr-125, Arg-186, Gln-195, Gly-215, and Arg-216; that span reads DLKYHDIPNT. Catalysis depends on Lys-66, which acts as the Proton donor.

This sequence belongs to the OMP decarboxylase family. Type 1 subfamily. In terms of assembly, homodimer.

The enzyme catalyses orotidine 5'-phosphate + H(+) = UMP + CO2. Its pathway is pyrimidine metabolism; UMP biosynthesis via de novo pathway; UMP from orotate: step 2/2. Functionally, catalyzes the decarboxylation of orotidine 5'-monophosphate (OMP) to uridine 5'-monophosphate (UMP). In Pelobacter propionicus (strain DSM 2379 / NBRC 103807 / OttBd1), this protein is Orotidine 5'-phosphate decarboxylase.